The sequence spans 159 residues: Phosphopantetheine adenylyltransferase (159 aa).

Serine 8 provides a ligand contact to substrate. ATP is bound by residues 8 to 9 (SF) and histidine 16. Substrate is bound by residues lysine 40, threonine 72, and arginine 86. Residues 87–89 (GLR), glutamate 97, and 122–128 (HSFVSSS) contribute to the ATP site.

The protein belongs to the bacterial CoaD family. In terms of assembly, homohexamer. The cofactor is Mg(2+).

The protein localises to the cytoplasm. It carries out the reaction (R)-4'-phosphopantetheine + ATP + H(+) = 3'-dephospho-CoA + diphosphate. It participates in cofactor biosynthesis; coenzyme A biosynthesis; CoA from (R)-pantothenate: step 4/5. In terms of biological role, reversibly transfers an adenylyl group from ATP to 4'-phosphopantetheine, yielding dephospho-CoA (dPCoA) and pyrophosphate. This chain is Phosphopantetheine adenylyltransferase, found in Synechococcus sp. (strain JA-2-3B'a(2-13)) (Cyanobacteria bacterium Yellowstone B-Prime).